The primary structure comprises 81 residues: Cortexin-2 (81 aa).

Residues 29–49 (TAFAFVGMLLVFLGLLIVRCF) traverse the membrane as a helical segment.

Belongs to the cortexin family.

It is found in the membrane. The sequence is that of Cortexin-2 (ctxn2) from Danio rerio (Zebrafish).